Here is a 1165-residue protein sequence, read N- to C-terminus: Error-prone DNA polymerase (1165 aa).

The disordered stretch occupies residues serine 1111 to histidine 1165. Residues proline 1152 to histidine 1165 are compositionally biased toward basic and acidic residues.

This sequence belongs to the DNA polymerase type-C family. DnaE2 subfamily.

Its subcellular location is the cytoplasm. The enzyme catalyses DNA(n) + a 2'-deoxyribonucleoside 5'-triphosphate = DNA(n+1) + diphosphate. Its function is as follows. DNA polymerase involved in damage-induced mutagenesis and translesion synthesis (TLS). It is not the major replicative DNA polymerase. This chain is Error-prone DNA polymerase, found in Rhodopseudomonas palustris (strain HaA2).